Reading from the N-terminus, the 159-residue chain is Small ribosomal subunit protein uS7 (159 aa).

Belongs to the universal ribosomal protein uS7 family. Part of the 30S ribosomal subunit. Contacts proteins S9 and S11.

One of the primary rRNA binding proteins, it binds directly to 16S rRNA where it nucleates assembly of the head domain of the 30S subunit. Is located at the subunit interface close to the decoding center, probably blocks exit of the E-site tRNA. The sequence is that of Small ribosomal subunit protein uS7 from Elusimicrobium minutum (strain Pei191).